We begin with the raw amino-acid sequence, 244 residues long: Ribonuclease 3 (244 aa).

Positions 7 to 134 constitute an RNase III domain; that stretch reads FEEVEKTLNI…IIAAIYIDSG (128 aa). Glutamate 47 lines the Mg(2+) pocket. Aspartate 51 is a catalytic residue. Residues asparagine 120 and glutamate 123 each coordinate Mg(2+). Glutamate 123 is an active-site residue. The region spanning 161–230 is the DRBM domain; that stretch reads DYKTNLQEIV…AQDALKKLKS (70 aa).

Belongs to the ribonuclease III family. As to quaternary structure, homodimer. It depends on Mg(2+) as a cofactor.

The protein localises to the cytoplasm. It carries out the reaction Endonucleolytic cleavage to 5'-phosphomonoester.. In terms of biological role, digests double-stranded RNA. Involved in the processing of primary rRNA transcript to yield the immediate precursors to the large and small rRNAs (23S and 16S). Processes some mRNAs, and tRNAs when they are encoded in the rRNA operon. Processes pre-crRNA and tracrRNA of type II CRISPR loci if present in the organism. The sequence is that of Ribonuclease 3 from Clostridium kluyveri (strain NBRC 12016).